Consider the following 202-residue polypeptide: Large ribosomal subunit protein bL17 (202 aa).

The segment covering 130–142 (AAPAATAPAPVEE) has biased composition (low complexity). Residues 130 to 202 (AAPAATAPAP…TEESTEDDKA (73 aa)) form a disordered region. Acidic residues-rich tracts occupy residues 143–168 (APAE…EASP) and 177–202 (QPVE…DDKA).

The protein belongs to the bacterial ribosomal protein bL17 family. Part of the 50S ribosomal subunit. Contacts protein L32.

This is Large ribosomal subunit protein bL17 from Nocardioides sp. (strain ATCC BAA-499 / JS614).